The primary structure comprises 476 residues: Bifunctional protein HldE (476 aa).

The ribokinase stretch occupies residues 1-318 (MAQYSAEFKQ…ENAIHARPET (318 aa)). 195–198 (NMSE) is a binding site for ATP. The active site involves Asp-264. Residues 344–476 (MTNGCFDILH…VIEKIKLLKD (133 aa)) are cytidylyltransferase.

In the N-terminal section; belongs to the carbohydrate kinase PfkB family. This sequence in the C-terminal section; belongs to the cytidylyltransferase family. Homodimer.

The catalysed reaction is D-glycero-beta-D-manno-heptose 7-phosphate + ATP = D-glycero-beta-D-manno-heptose 1,7-bisphosphate + ADP + H(+). It catalyses the reaction D-glycero-beta-D-manno-heptose 1-phosphate + ATP + H(+) = ADP-D-glycero-beta-D-manno-heptose + diphosphate. Its pathway is nucleotide-sugar biosynthesis; ADP-L-glycero-beta-D-manno-heptose biosynthesis; ADP-L-glycero-beta-D-manno-heptose from D-glycero-beta-D-manno-heptose 7-phosphate: step 1/4. The protein operates within nucleotide-sugar biosynthesis; ADP-L-glycero-beta-D-manno-heptose biosynthesis; ADP-L-glycero-beta-D-manno-heptose from D-glycero-beta-D-manno-heptose 7-phosphate: step 3/4. It functions in the pathway bacterial outer membrane biogenesis; LOS core biosynthesis. In terms of biological role, catalyzes the phosphorylation of D-glycero-D-manno-heptose 7-phosphate at the C-1 position to selectively form D-glycero-beta-D-manno-heptose-1,7-bisphosphate. Catalyzes the ADP transfer from ATP to D-glycero-beta-D-manno-heptose 1-phosphate, yielding ADP-D-glycero-beta-D-manno-heptose. This is Bifunctional protein HldE from Haemophilus influenzae (strain ATCC 51907 / DSM 11121 / KW20 / Rd).